Consider the following 508-residue polypeptide: Probable cytosol aminopeptidase (508 aa).

Residues Lys276 and Asp281 each contribute to the Mn(2+) site. The active site involves Lys288. 3 residues coordinate Mn(2+): Asp299, Asp358, and Glu360. Arg362 is a catalytic residue.

The protein belongs to the peptidase M17 family. It depends on Mn(2+) as a cofactor.

The protein localises to the cytoplasm. The enzyme catalyses Release of an N-terminal amino acid, Xaa-|-Yaa-, in which Xaa is preferably Leu, but may be other amino acids including Pro although not Arg or Lys, and Yaa may be Pro. Amino acid amides and methyl esters are also readily hydrolyzed, but rates on arylamides are exceedingly low.. The catalysed reaction is Release of an N-terminal amino acid, preferentially leucine, but not glutamic or aspartic acids.. Its function is as follows. Presumably involved in the processing and regular turnover of intracellular proteins. Catalyzes the removal of unsubstituted N-terminal amino acids from various peptides. This Chlorobium luteolum (strain DSM 273 / BCRC 81028 / 2530) (Pelodictyon luteolum) protein is Probable cytosol aminopeptidase.